Reading from the N-terminus, the 346-residue chain is Tubulin-specific chaperone C (346 aa).

N-acetylmethionine is present on Met1. Positions 1-26 are disordered; the sequence is MESVSCSAAAVRTGDMESQRDLSLVP. Phosphoserine occurs at positions 80 and 168. The tract at residues 140–171 is disordered; that stretch reads KTRGKDAASSTKVDAAPGIPPAVESIQDSPLP. A C-CAP/cofactor C-like domain is found at 171–323; it reads PKKAEGDLGP…NWNDVDDFNW (153 aa).

It belongs to the TBCC family. In terms of assembly, supercomplex made of cofactors A to E. Cofactors A and D function by capturing and stabilizing tubulin in a quasi-native conformation. Cofactor E binds to the cofactor D-tubulin complex; interaction with cofactor C then causes the release of tubulin polypeptides that are committed to the native state. In terms of tissue distribution, expressed in the retina. Expressed in the rod and cone photoreceptors, extending from the inner segments (IS), through the outer nuclear layer (ONL) and into the synapses in the outer plexiform layer (OPL). Strongly expressed to the photoreceptor connecting cilium at the tips of the IS (at protein level).

It localises to the cytoplasm. Tubulin-folding protein; involved in the final step of the tubulin folding pathway. The sequence is that of Tubulin-specific chaperone C (TBCC) from Homo sapiens (Human).